The following is an 883-amino-acid chain: Copper-transporting ATPase PAA2, chloroplastic (883 aa).

A chloroplast-targeting transit peptide spans 1 to 65 (MASNLLRFPL…TQSFESTESS (65 aa)). The HMA domain maps to 76–146 (TPILLDVSGM…RLTESGFEAK (71 aa)). Cu cation-binding residues include Cys87 and Cys90. 6 consecutive transmembrane segments (helical) span residues 179–199 (VAFA…HILH), 209–229 (GIWD…GALL), 250–270 (MNSL…ISLV), 274–294 (LEWD…VLLG), 445–465 (AIAG…FAFW), and 499–519 (VLVV…ILIG). Catalysis depends on Asp548, which acts as the 4-aspartylphosphate intermediate. Residue 761–768 (GDGINDAP) coordinates ATP. Asp762 and Asp766 together coordinate Mg(2+). 2 helical membrane passes run 822–842 (LAWA…VLLP) and 846–866 (FAMT…FVVS).

This sequence belongs to the cation transport ATPase (P-type) (TC 3.A.3) family. Type IB subfamily. In terms of tissue distribution, expressed in the shoots only and not in the roots.

The protein resides in the plastid. Its subcellular location is the chloroplast thylakoid membrane. It carries out the reaction Cu(2+)(in) + ATP + H2O = Cu(2+)(out) + ADP + phosphate + H(+). Mediates copper transfer across the chloroplast thylakoid membrane. Required for copper delivery into the thylakoids lumen, which is essential for the function of copper proteins. The polypeptide is Copper-transporting ATPase PAA2, chloroplastic (PAA2) (Arabidopsis thaliana (Mouse-ear cress)).